A 172-amino-acid polypeptide reads, in one-letter code: Large ribosomal subunit protein uL10 (172 aa).

The protein belongs to the universal ribosomal protein uL10 family. Part of the ribosomal stalk of the 50S ribosomal subunit. The N-terminus interacts with L11 and the large rRNA to form the base of the stalk. The C-terminus forms an elongated spine to which L12 dimers bind in a sequential fashion forming a multimeric L10(L12)X complex.

Its function is as follows. Forms part of the ribosomal stalk, playing a central role in the interaction of the ribosome with GTP-bound translation factors. This Methylorubrum extorquens (strain CM4 / NCIMB 13688) (Methylobacterium extorquens) protein is Large ribosomal subunit protein uL10.